A 434-amino-acid polypeptide reads, in one-letter code: Enolase (434 aa).

Position 163 (Gln-163) interacts with (2R)-2-phosphoglycerate. The active-site Proton donor is the Glu-205. Mg(2+)-binding residues include Asp-243, Glu-291, and Asp-318. Positions 343, 372, 373, and 394 each coordinate (2R)-2-phosphoglycerate. Residue Lys-343 is the Proton acceptor of the active site.

This sequence belongs to the enolase family. Mg(2+) is required as a cofactor.

Its subcellular location is the cytoplasm. The protein resides in the secreted. It localises to the cell surface. The enzyme catalyses (2R)-2-phosphoglycerate = phosphoenolpyruvate + H2O. It functions in the pathway carbohydrate degradation; glycolysis; pyruvate from D-glyceraldehyde 3-phosphate: step 4/5. Its function is as follows. Catalyzes the reversible conversion of 2-phosphoglycerate (2-PG) into phosphoenolpyruvate (PEP). It is essential for the degradation of carbohydrates via glycolysis. In Fusobacterium nucleatum subsp. nucleatum (strain ATCC 25586 / DSM 15643 / BCRC 10681 / CIP 101130 / JCM 8532 / KCTC 2640 / LMG 13131 / VPI 4355), this protein is Enolase.